The following is a 156-amino-acid chain: MSDVILDLQLACDEARGLPAEADFLRWLQGVLPLFRDCAEVTVRLVDEAESHELNMTYRGKDRPTNVLSFPFEAPPEVELPLLGDLVICHQVVEREAQQQEKALEAHWAHMVVHGSLHLLGYDHIQDEEALEMESLETEIMQKLGYPDPYLAEKEA.

Residues H114, H118, and H124 each coordinate Zn(2+).

It belongs to the endoribonuclease YbeY family. It depends on Zn(2+) as a cofactor.

Its subcellular location is the cytoplasm. Functionally, single strand-specific metallo-endoribonuclease involved in late-stage 70S ribosome quality control and in maturation of the 3' terminus of the 16S rRNA. This Sodalis glossinidius (strain morsitans) protein is Endoribonuclease YbeY.